We begin with the raw amino-acid sequence, 251 residues long: Zinc import ATP-binding protein ZnuC (251 aa).

One can recognise an ABC transporter domain in the interval 5–220 (VSLENVSVSF…PEFISMFGPR (216 aa)). 37–44 (GPNGAGKS) serves as a coordination point for ATP.

It belongs to the ABC transporter superfamily. Zinc importer (TC 3.A.1.15.5) family. As to quaternary structure, the complex is composed of two ATP-binding proteins (ZnuC), two transmembrane proteins (ZnuB) and a solute-binding protein (ZnuA).

It localises to the cell inner membrane. The enzyme catalyses Zn(2+)(out) + ATP(in) + H2O(in) = Zn(2+)(in) + ADP(in) + phosphate(in) + H(+)(in). Its function is as follows. Part of the ABC transporter complex ZnuABC involved in zinc import. Responsible for energy coupling to the transport system. This chain is Zinc import ATP-binding protein ZnuC, found in Salmonella choleraesuis (strain SC-B67).